The following is a 716-amino-acid chain: Probable glutamate--tRNA ligase, cytoplasmic (716 aa).

S190 is subject to Phosphoserine. 210-212 lines the L-glutamate pocket; the sequence is RFP. Positions 215–224 match the 'HIGH' region motif; that stretch reads PSGYLHIGHA. H220 is an ATP binding site. Residues D246, 386 to 390, and R404 contribute to the L-glutamate site; that span reads YDFAC. Residues E407 and 441 to 445 contribute to the ATP site; that span reads LLSKR. A 'KMSKS' region motif is present at residues 441-445; that stretch reads LLSKR.

Belongs to the class-I aminoacyl-tRNA synthetase family. Glutamate--tRNA ligase type 2 subfamily. Component of a yeast aminoacyl-tRNA synthase (aaRS) complex formed by methionyl-tRNA synthase, glutamyl-tRNA synthase and the tRNA aminoacylation cofactor arc1 in a stoichiometric complex. Interacts with arc1/SPAC30C2.04.

It localises to the cytoplasm. Its subcellular location is the nucleus. The catalysed reaction is tRNA(Glu) + L-glutamate + ATP = L-glutamyl-tRNA(Glu) + AMP + diphosphate. Its function is as follows. Catalyzes the attachment of glutamate to tRNA(Glu) in a two-step reaction: glutamate is first activated by ATP to form Glu-AMP and then transferred to the acceptor end of tRNA(Glu). The protein is Probable glutamate--tRNA ligase, cytoplasmic (gus1) of Schizosaccharomyces pombe (strain 972 / ATCC 24843) (Fission yeast).